The primary structure comprises 173 residues: NADH-ubiquinone oxidoreductase chain 6 (173 aa).

The next 5 helical transmembrane spans lie at methionine 1–serine 21, tyrosine 27–glycine 47, valine 48–valine 68, valine 87–leucine 107, and cysteine 139–leucine 159.

Belongs to the complex I subunit 6 family. In terms of assembly, core subunit of respiratory chain NADH dehydrogenase (Complex I) which is composed of 45 different subunits.

The protein localises to the mitochondrion inner membrane. It carries out the reaction a ubiquinone + NADH + 5 H(+)(in) = a ubiquinol + NAD(+) + 4 H(+)(out). In terms of biological role, core subunit of the mitochondrial membrane respiratory chain NADH dehydrogenase (Complex I) which catalyzes electron transfer from NADH through the respiratory chain, using ubiquinone as an electron acceptor. Essential for the catalytic activity and assembly of complex I. The protein is NADH-ubiquinone oxidoreductase chain 6 (MT-ND6) of Gallus gallus (Chicken).